Consider the following 464-residue polypeptide: Alpha-1,6-mannosyl-glycoprotein 4-beta-N-acetylglucosaminyltransferase (464 aa).

Topologically, residues 1-10 (MRCSPKRSLT) are cytoplasmic. The helical; Signal-anchor for type II membrane protein transmembrane segment at 11 to 31 (AVIAASFLLLLLLLLLHRGSW) threads the bilayer. Residues 32–464 (QDPQEVQFRD…QSIGIWTAGT (433 aa)) lie on the Lumenal side of the membrane. N70 and N201 each carry an N-linked (GlcNAc...) asparagine glycan.

The protein belongs to the glycosyltransferase 54 family. It depends on a divalent metal cation as a cofactor. In terms of tissue distribution, highly expressed in oviduct, spleen, lung and colon.

The protein localises to the golgi apparatus membrane. It carries out the reaction N(4)-{beta-D-GlcNAc-(1-&gt;2)-[beta-D-GlcNAc-(1-&gt;4)]-alpha-D-Man-(1-&gt;3)-[beta-D-GlcNAc-(1-&gt;2)-[beta-D-GlcNAc-(1-&gt;6)]-alpha-D-Man-(1-&gt;6)]-beta-D-Man-(1-&gt;4)-beta-D-GlcNAc-(1-&gt;4)-beta-D-GlcNAc}-L-asparaginyl-[protein] + UDP-N-acetyl-alpha-D-glucosamine = N(4)-{beta-D-GlcNAc-(1-&gt;2)-[beta-D-GlcNAc-(1-&gt;4)]-alpha-D-Man-(1-&gt;3)-[beta-D-GlcNAc-(1-&gt;2)-[beta-D-GlcNAc-(1-&gt;4)]-[beta-D-GlcNAc-(1-&gt;6)]-alpha-D-Man-(1-&gt;6)]-beta-D-Man-(1-&gt;4)-beta-D-GlcNAc-(1-&gt;4)-beta-D-GlcNAc}-L-asparaginyl-[protein] + UDP + H(+). The protein operates within protein modification; protein glycosylation. Glycosyltransferase that catalyzes the transfer of GlcNAc to the Manalpha1-6 arm to form GlcNAcBeta1-4Manalpha1-6 linkage (also named 'GnT-VI' activity). May also participate in the transfer of N-acetylglucosamine (GlcNAc) to the core mannose residues of N-linked glycans by catalyzing the formation of the GlcNAcbeta1-4 branch on the GlcNAcbeta1-2Manalpha1-3 arm of the core structure of N-linked glycans. The chain is Alpha-1,6-mannosyl-glycoprotein 4-beta-N-acetylglucosaminyltransferase (MGAT4C) from Gallus gallus (Chicken).